Reading from the N-terminus, the 263-residue chain is tRNA pseudouridine synthase A (263 aa).

Aspartate 54 (nucleophile) is an active-site residue. Tyrosine 113 is a binding site for substrate.

This sequence belongs to the tRNA pseudouridine synthase TruA family. As to quaternary structure, homodimer.

It catalyses the reaction uridine(38/39/40) in tRNA = pseudouridine(38/39/40) in tRNA. Functionally, formation of pseudouridine at positions 38, 39 and 40 in the anticodon stem and loop of transfer RNAs. This chain is tRNA pseudouridine synthase A, found in Lactobacillus helveticus (strain DPC 4571).